The chain runs to 550 residues: MSHARDDHQGASQGSQWLSQARTLVQEGTLFNFIRCLLLFQGDSGQKEMTPGKKIPIFVDGVVLNGPQTDVKAGEKFVEEACRLIMEEVVLKATDVNEKVCEWQPPEQLRQLLDLEMRDTGESQDKLLKLCQDVIHFSVKTNHPRFFNQLYAGLDYYSLAARIITEALNPSIYTYEVSPVFLLVEEAVLKKMIECVGWKEGDGIFNPGGSVSNMCAMNLARYRHCPDIKEKGLSGLPRLILFTSAECHYSMKKAASFLGIGTQNVYFVETDGRGKMIPEDLEKQIWQARQEGAVPFLVCATSGTTVLGAFDPLDEIAEVCERHGLWLHVDASWGGSALVSRKHRRLLHGIHRADSVAWNPHKMLMAGIQCSALLVKDKSDLLKKCYSAKATYLFQQDKFYDVSYDTGDKSIQCSRRPDAFKFWMTWKALGTSGLEERVNRAFALSRYLVDEIKKREGFKLLMEPEYTNVCFWYIPPSLREMEEGPEFWRKLSLVAPAIKEKMMKKGSLMLGYQPHRGKVNFFRQVVISPQVSREDMDFLLDEIDSLGRDM.

K362 is subject to N6-(pyridoxal phosphate)lysine.

The protein belongs to the group II decarboxylase family. In terms of assembly, homodimer. Pyridoxal 5'-phosphate is required as a cofactor. As to expression, expressed in skeletal muscles and kidney (at protein level). Expressed in skeletal muscle and weakly in brain. Not expressed in liver or kidney. Expressed in brain, olfactory bulb, liver, muscle and kidney with the highest expression in olfactory bulb and almost not detected in liver (at protein level).

The catalysed reaction is L-aspartate + H(+) = beta-alanine + CO2. It carries out the reaction 3-sulfino-L-alanine + H(+) = hypotaurine + CO2. It catalyses the reaction L-cysteate + H(+) = taurine + CO2. With respect to regulation, activated weakly by 0.2-0.4 mM Li(+). Inhibited by bis-carboxymethyl-trithiocarbonate, ethylxanthogenacetic acid and 2,5-disulfoaniline. Functionally, catalyzes the decarboxylation of L-aspartate, 3-sulfino-L-alanine (cysteine sulfinic acid), and L-cysteate to beta-alanine, hypotaurine and taurine, respectively. The preferred substrate is L-aspartate. Does not exhibit any decarboxylation activity toward glutamate. This is Acidic amino acid decarboxylase GADL1 from Mus musculus (Mouse).